A 630-amino-acid polypeptide reads, in one-letter code: Sodium-dependent serotonin transporter (630 aa).

At M1 to D87 the chain is on the cytoplasmic side. Positions V31–T59 are disordered. Phosphotyrosine is present on Y47. Residues F88–N112 traverse the membrane as a helical segment. The Na(+) site is built by G94, A96, V97, D98, and N101. Residue D98 coordinates serotonin. Residues G113–G115 lie on the Extracellular side of the membrane. A helical transmembrane segment spans residues A116–M135. At E136–G160 the chain is on the cytoplasmic side. Y142 carries the post-translational modification Phosphotyrosine. Residues I161–Y186 form a helical membrane-spanning segment. The Extracellular segment spans residues L187–S252. An intrachain disulfide couples C200 to C209. Residues N208 and N217 are each glycosylated (N-linked (GlcNAc...) asparagine). The chain crosses the membrane as a helical span at residues W253–W271. Over K272 to S277 the chain is Cytoplasmic. Phosphothreonine is present on T276. The chain crosses the membrane as a helical span at residues G278–V297. Residues R298–G324 lie on the Extracellular side of the membrane. Residues V325–F347 traverse the membrane as a helical segment. S336 lines the Na(+) pocket. Topologically, residues A348–D360 are cytoplasmic. Residues A361–F380 form a helical membrane-spanning segment. N368 contributes to the Na(+) binding site. Residues T381–T421 lie on the Extracellular side of the membrane. A helical membrane pass occupies residues F422 to L443. Positions 434, 437, and 438 each coordinate Na(+). T439 contributes to the serotonin binding site. Residues E444–E463 are Cytoplasmic-facing. The helical transmembrane segment at W464 to F483 threads the bilayer. Residues G484 to E494 are Extracellular-facing. Serotonin-binding residues include E494 and Y495. The helical transmembrane segment at Y495 to Y516 threads the bilayer. At G517 to R538 the chain is on the cytoplasmic side. The chain crosses the membrane as a helical span at residues I539–M558. Residues F556 and S559 each contribute to the serotonin site. Topologically, residues S559–S574 are extracellular. Residues I575–Y595 traverse the membrane as a helical segment. Over R596 to V630 the chain is Cytoplasmic. Residues T616–D624 are interaction with RAB4A.

Belongs to the sodium:neurotransmitter symporter (SNF) (TC 2.A.22) family. SLC6A4 subfamily. Monomer or homooligomer. Interacts (via C-terminus) with SCAMP2; the interaction is direct and retains transporter molecules intracellularly. Interacts with filamentous actin and STX1A. Interacts (via the N-terminus) with STX1A (via the H3 domain); this interaction regulates SLC4A6 channel conductance. Interacts with SEC23A, SEC24C and PATJ. Interacts with NOS1; the interaction may diminish the cell surface localization of SERT in the brain and, correspondingly, reduce serotonin reuptake. Interacts with TGFB1I1. Interacts with ITGAV:ITGB3. Interacts (via C-terminus) with ITGB3; this interaction regulates SLC6A4 trafficking. Post-translationally, phosphorylation at Thr-276 increases 5-HT uptake and is required for cGMP-mediated SERT regulation.

Its subcellular location is the cell membrane. The protein localises to the endomembrane system. It is found in the endosome membrane. It localises to the synapse. The protein resides in the cell junction. Its subcellular location is the focal adhesion. The protein localises to the cell projection. It is found in the neuron projection. The enzyme catalyses serotonin(out) + K(+)(in) + Na(+)(out) + H(+)(in) = serotonin(in) + K(+)(out) + Na(+)(in) + H(+)(out). Functionally, serotonin transporter that cotransports serotonin with one Na(+) ion in exchange for one K(+) ion and possibly one proton in an overall electroneutral transport cycle. Transports serotonin across the plasma membrane from the extracellular compartment to the cytosol thus limiting serotonin intercellular signaling. Essential for serotonin homeostasis in the central nervous system. In the developing somatosensory cortex, acts in glutamatergic neurons to control serotonin uptake and its trophic functions accounting for proper spatial organization of cortical neurons and elaboration of sensory circuits. In the mature cortex, acts primarily in brainstem raphe neurons to mediate serotonin uptake from the synaptic cleft back into the pre-synaptic terminal thus terminating serotonin signaling at the synapse. Modulates mucosal serotonin levels in the gastrointestinal tract through uptake and clearance of serotonin in enterocytes. Required for enteric neurogenesis and gastrointestinal reflexes. Regulates blood serotonin levels by ensuring rapid high affinity uptake of serotonin from plasma to platelets, where it is further stored in dense granules via vesicular monoamine transporters and then released upon stimulation. Mechanistically, the transport cycle starts with an outward-open conformation having Na1(+) and Cl(-) sites occupied. The binding of a second extracellular Na2(+) ion and serotonin substrate leads to structural changes to outward-occluded to inward-occluded to inward-open, where the Na2(+) ion and serotonin are released into the cytosol. Binding of intracellular K(+) ion induces conformational transitions to inward-occluded to outward-open and completes the cycle by releasing K(+) possibly together with a proton bound to Asp-98 into the extracellular compartment. Na1(+) and Cl(-) ions remain bound throughout the transport cycle. Additionally, displays serotonin-induced channel-like conductance for monovalent cations, mainly Na(+) ions. The channel activity is uncoupled from the transport cycle and may contribute to the membrane resting potential or excitability. The sequence is that of Sodium-dependent serotonin transporter (SLC6A4) from Macaca mulatta (Rhesus macaque).